Here is a 152-residue protein sequence, read N- to C-terminus: D-aminoacyl-tRNA deacylase (152 aa).

The Gly-cisPro motif, important for rejection of L-amino acids signature appears at 137-138 (GP).

The protein belongs to the DTD family. Homodimer.

It is found in the cytoplasm. It catalyses the reaction glycyl-tRNA(Ala) + H2O = tRNA(Ala) + glycine + H(+). It carries out the reaction a D-aminoacyl-tRNA + H2O = a tRNA + a D-alpha-amino acid + H(+). Functionally, an aminoacyl-tRNA editing enzyme that deacylates mischarged D-aminoacyl-tRNAs. Also deacylates mischarged glycyl-tRNA(Ala), protecting cells against glycine mischarging by AlaRS. Acts via tRNA-based rather than protein-based catalysis; rejects L-amino acids rather than detecting D-amino acids in the active site. By recycling D-aminoacyl-tRNA to D-amino acids and free tRNA molecules, this enzyme counteracts the toxicity associated with the formation of D-aminoacyl-tRNA entities in vivo and helps enforce protein L-homochirality. This is D-aminoacyl-tRNA deacylase from Geobacillus sp. (strain WCH70).